A 183-amino-acid chain; its full sequence is Ribosome maturation factor RimM (183 aa).

The PRC barrel domain occupies 105–181 (ANEYHLMDLI…RIEIDPPLGL (77 aa)).

Belongs to the RimM family. As to quaternary structure, binds ribosomal protein uS19.

The protein localises to the cytoplasm. An accessory protein needed during the final step in the assembly of 30S ribosomal subunit, possibly for assembly of the head region. Essential for efficient processing of 16S rRNA. May be needed both before and after RbfA during the maturation of 16S rRNA. It has affinity for free ribosomal 30S subunits but not for 70S ribosomes. This is Ribosome maturation factor RimM from Thermosynechococcus vestitus (strain NIES-2133 / IAM M-273 / BP-1).